The sequence spans 152 residues: Arginine repressor (152 aa).

The protein belongs to the ArgR family.

The protein localises to the cytoplasm. Its pathway is amino-acid biosynthesis; L-arginine biosynthesis [regulation]. In terms of biological role, regulates arginine biosynthesis genes. In Caldicellulosiruptor saccharolyticus (strain ATCC 43494 / DSM 8903 / Tp8T 6331), this protein is Arginine repressor.